The primary structure comprises 928 residues: Neuropilin-1 (928 aa).

The signal sequence occupies residues 1-21; that stretch reads MLLRLLSCCCWLLCSLRSSWA. Over 22–860 the chain is Extracellular; sequence SRNDKCGDTI…PGNVLKTLDP (839 aa). 3 cysteine pairs are disulfide-bonded: Cys-27–Cys-54, Cys-82–Cys-104, and Cys-147–Cys-173. 2 consecutive CUB domains span residues 27–141 and 147–265; these read CGDT…YEVF and CSRN…FSVV. Asn-150 carries an N-linked (GlcNAc...) asparagine glycan. Ca(2+)-binding residues include Glu-195, Asp-209, and Asp-250. Cys-206 and Cys-228 form a disulfide bridge. N-linked (GlcNAc...) asparagine glycosylation is found at Asn-261, Asn-300, and Asn-523. Cystine bridges form between Cys-275/Cys-424 and Cys-431/Cys-584. F5/8 type C domains lie at 275-424 and 431-584; these read CKEA…LYGC and CSRM…LLGC. The O-linked (Xyl...) (chondroitin sulfate) serine; alternate glycan is linked to Ser-613. Ser-613 carries an O-linked (Xyl...) (heparan sulfate) serine; alternate glycan. Positions 624 to 645 are disordered; sequence GATGQSTETPTVEASPEEPDMT. Residues 625 to 635 show a composition bias toward polar residues; sequence ATGQSTETPTV. The region spanning 646–812 is the MAM domain; that stretch reads HSDLDCKFGW…NHISPSQCRA (167 aa). Ser-834 carries an O-linked (Xyl...) (chondroitin sulfate) serine glycan. The N-linked (GlcNAc...) asparagine glycan is linked to Asn-844. A helical membrane pass occupies residues 861-883; that stretch reads ILITIIAMSALGVLLGAICGVVL. Topologically, residues 884 to 928 are cytoplasmic; sequence YCACWHNGMSERNLSALENYNFELVDGVKLKKDKLNTQNSYSEAS.

It belongs to the neuropilin family. As to quaternary structure, homodimer, and heterodimer. Retinal ganglion cells and visual center neurons.

It localises to the mitochondrion membrane. The protein localises to the cell membrane. Receptor involved in the development of the cardiovascular system, in angiogenesis, in the formation of certain neuronal circuits and in organogenesis outside the nervous system. Mediates the chemorepulsant activity of semaphorins. Binding to VEGFA initiates a signaling pathway needed for motor neuron axon guidance and cell body migration, including for the caudal migration of facial motor neurons from rhombomere 4 to rhombomere 6 during embryonic development. Regulates mitochondrial iron transport via interaction. The polypeptide is Neuropilin-1 (nrp1) (Xenopus laevis (African clawed frog)).